We begin with the raw amino-acid sequence, 463 residues long: Elongation factor 1-alpha 2 (463 aa).

N,N,N-trimethylglycine is present on Gly2. Residues 5 to 242 (KTHINIVVIG…DTILPPTRPT (238 aa)) form the tr-type G domain. Positions 14–21 (GHVDSGKS) are G1. Residues Asp17, Ser18, Gly19, Lys20, Ser21, and Thr22 each contribute to the GTP site. Residue Asp17 participates in Mg(2+) binding. Lys36 is modified (N6,N6,N6-trimethyllysine; alternate). Residue Lys36 is modified to N6,N6-dimethyllysine; alternate. Lys36 bears the N6-methyllysine; alternate mark. Lys55 carries the post-translational modification N6,N6,N6-trimethyllysine. Lys55 carries the post-translational modification N6,N6-dimethyllysine. The G2 stretch occupies residues 70 to 74 (GITID). The residue at position 79 (Lys79) is an N6,N6,N6-trimethyllysine. The tract at residues 91–94 (DAPG) is G3. GTP contacts are provided by Asn153, Lys154, and Asp156. The segment at 153–156 (NKMD) is G4. Ser163 carries the post-translational modification Phosphoserine. An N6,N6-dimethyllysine; alternate modification is found at Lys165. Lys165 is subject to N6-methyllysine; alternate. Residue Lys165 is modified to N6,N6,N6-trimethyllysine; alternate; by EEF1AKMT3. Lys179 is modified (N6-acetyllysine). GTP-binding residues include Ser194, Gly195, and Trp196. The G5 stretch occupies residues 194–196 (SGW). Ser224 bears the Phosphoserine mark. The residue at position 239 (Thr239) is a Phosphothreonine. 5-glutamyl glycerylphosphorylethanolamine occurs at positions 301 and 374. The residue at position 439 (Lys439) is an N6-acetyllysine. The disordered stretch occupies residues 444 to 463 (KSGGAGKVTKSAQKAQKAGK).

Belongs to the TRAFAC class translation factor GTPase superfamily. Classic translation factor GTPase family. EF-Tu/EF-1A subfamily. In terms of assembly, homodimer; arranged in a 'head to tail' dimer configuration. Post-translationally, trimethylated at Lys-165 by EEF1AKMT3. Mono-, di-, and trimethylated at Lys-36 by EEF1AKMT4; trimethylated form is predominant. Methylation by EEF1AKMT4 contributes to the fine-tuning of translation rates for a subset of tRNAs. Trimethylated at the N-terminus and dimethylated at Lys-55 by METTL13.

It is found in the endoplasmic reticulum membrane. It catalyses the reaction GTP + H2O = GDP + phosphate + H(+). In terms of biological role, translation elongation factor that catalyzes the GTP-dependent binding of aminoacyl-tRNA (aa-tRNA) to the A-site of ribosomes during the elongation phase of protein synthesis. Base pairing between the mRNA codon and the aa-tRNA anticodon promotes GTP hydrolysis, releasing the aa-tRNA from EEF1A1 and allowing its accommodation into the ribosome. The growing protein chain is subsequently transferred from the P-site peptidyl tRNA to the A-site aa-tRNA, extending it by one amino acid through ribosome-catalyzed peptide bond formation. The chain is Elongation factor 1-alpha 2 (Eef1a2) from Rattus norvegicus (Rat).